Here is a 260-residue protein sequence, read N- to C-terminus: Triosephosphate isomerase (260 aa).

11–13 contributes to the substrate binding site; that stretch reads NWK. H103 (electrophile) is an active-site residue. E175 serves as the catalytic Proton acceptor. Substrate is bound by residues G181, S220, and 241–242; that span reads GG.

It belongs to the triosephosphate isomerase family. Homodimer.

Its subcellular location is the cytoplasm. It carries out the reaction D-glyceraldehyde 3-phosphate = dihydroxyacetone phosphate. It functions in the pathway carbohydrate biosynthesis; gluconeogenesis. It participates in carbohydrate degradation; glycolysis; D-glyceraldehyde 3-phosphate from glycerone phosphate: step 1/1. Its function is as follows. Involved in the gluconeogenesis. Catalyzes stereospecifically the conversion of dihydroxyacetone phosphate (DHAP) to D-glyceraldehyde-3-phosphate (G3P). The polypeptide is Triosephosphate isomerase (Shewanella woodyi (strain ATCC 51908 / MS32)).